Here is a 209-residue protein sequence, read N- to C-terminus: Thymidine kinase (209 aa).

ATP contacts are provided by residues 25–32 and 103–106; these read GCMFAGKT and DEVQ. The active-site Proton acceptor is Glu104. The Zn(2+) site is built by Cys160, Cys163, Cys198, and Cys201.

This sequence belongs to the thymidine kinase family. Homotetramer.

The protein resides in the cytoplasm. It carries out the reaction thymidine + ATP = dTMP + ADP + H(+). In Mycoplasma mycoides subsp. mycoides SC (strain CCUG 32753 / NCTC 10114 / PG1), this protein is Thymidine kinase.